We begin with the raw amino-acid sequence, 139 residues long: Transcription antitermination protein NusB (139 aa).

It belongs to the NusB family.

In terms of biological role, involved in transcription antitermination. Required for transcription of ribosomal RNA (rRNA) genes. Binds specifically to the boxA antiterminator sequence of the ribosomal RNA (rrn) operons. The polypeptide is Transcription antitermination protein NusB (Limosilactobacillus fermentum (strain NBRC 3956 / LMG 18251) (Lactobacillus fermentum)).